The following is a 64-amino-acid chain: Large ribosomal subunit protein bL35c (64 aa).

Belongs to the bacterial ribosomal protein bL35 family.

The protein resides in the plastid. The protein localises to the chloroplast. The chain is Large ribosomal subunit protein bL35c from Cyanidium caldarium (Red alga).